Here is a 145-residue protein sequence, read N- to C-terminus: Putative esterase PA1618 (145 aa).

The protein belongs to the thioesterase PaaI family.

In Pseudomonas aeruginosa (strain ATCC 15692 / DSM 22644 / CIP 104116 / JCM 14847 / LMG 12228 / 1C / PRS 101 / PAO1), this protein is Putative esterase PA1618.